A 314-amino-acid polypeptide reads, in one-letter code: tRNA dimethylallyltransferase (314 aa).

16–23 is an ATP binding site; it reads GPTGVGKT. Position 18 to 23 (18 to 23) interacts with substrate; it reads TGVGKT. Positions 41 to 44 are interaction with substrate tRNA; the sequence is DSMQ.

The protein belongs to the IPP transferase family. Monomer. Mg(2+) is required as a cofactor.

The catalysed reaction is adenosine(37) in tRNA + dimethylallyl diphosphate = N(6)-dimethylallyladenosine(37) in tRNA + diphosphate. Catalyzes the transfer of a dimethylallyl group onto the adenine at position 37 in tRNAs that read codons beginning with uridine, leading to the formation of N6-(dimethylallyl)adenosine (i(6)A). This Desulfosudis oleivorans (strain DSM 6200 / JCM 39069 / Hxd3) (Desulfococcus oleovorans) protein is tRNA dimethylallyltransferase.